The primary structure comprises 624 residues: Actin-related protein 8 (624 aa).

Methionine 1 is subject to N-acetylmethionine. The segment covering 1–25 has biased composition (basic and acidic residues); the sequence is MTQAEKGDAENGKEKGGEKEKEQRG. Residues 1-29 are disordered; the sequence is MTQAEKGDAENGKEKGGEKEKEQRGVKRP. ATP is bound by residues serine 55 and threonine 56. Serine 132 carries the post-translational modification Phosphoserine. Position 283–286 (283–286) interacts with ATP; it reads DVGD. Position 412 is a phosphoserine (serine 412). The disordered stretch occupies residues 430-462; that stretch reads SKQEQSAKATADRKSASKPIGFEGDLRGQSSDL.

This sequence belongs to the actin family. ARP8 subfamily. In terms of assembly, component of the chromatin remodeling INO80 complex; specifically part of a complex module associated with the DBINO domain of INO80. Exists as monomers and dimers, but the dimer is most probably the biologically relevant form required for stable interactions with histones that exploits the twofold symmetry of the nucleosome core.

Its subcellular location is the nucleus. It localises to the chromosome. Functionally, plays an important role in the functional organization of mitotic chromosomes. Exhibits low basal ATPase activity, and unable to polymerize. Proposed core component of the chromatin remodeling INO80 complex which is involved in transcriptional regulation, DNA replication and probably DNA repair. Required for the recruitment of INO80 (and probably the INO80 complex) to sites of DNA damage Strongly prefer nucleosomes and H3-H4 tetramers over H2A-H2B dimers, suggesting it may act as a nucleosome recognition module within the complex. The chain is Actin-related protein 8 (Actr8) from Mus musculus (Mouse).